Consider the following 478-residue polypeptide: Serine/threonine-protein phosphatase T (478 aa).

TPR repeat units lie at residues 9–42 (ATALKVQGNKAFGQHEWPTAVDFYTQAIAKYDRE), 43–76 (PSFFSNRAQAHIKLEAYGFAIADATKALELDPAY), and 78–110 (KAYWRRALANTAILNYKDALRDFKVVAKREPNN). Positions 151–463 (AVDDSYDGVR…QVFEAVPHPD (313 aa)) are catalytic. Mn(2+) is bound by residues Asp-221, His-223, Asp-250, and Asn-282. His-283 acts as the Proton donor/acceptor in catalysis. His-331 and His-408 together coordinate Mn(2+).

Belongs to the PPP phosphatase family. PP-5 (PP-T) subfamily. Mg(2+) serves as cofactor. Requires Mn(2+) as cofactor.

The protein resides in the nucleus. The catalysed reaction is O-phospho-L-seryl-[protein] + H2O = L-seryl-[protein] + phosphate. It carries out the reaction O-phospho-L-threonyl-[protein] + H2O = L-threonyl-[protein] + phosphate. In terms of biological role, protein phosphatase that specifically binds to and dephosphorylates the molecular chaperone Hsp90. Dephosphorylation positively regulates the Hsp90 chaperone machinery. In Aspergillus oryzae (strain ATCC 42149 / RIB 40) (Yellow koji mold), this protein is Serine/threonine-protein phosphatase T.